The chain runs to 169 residues: Peptide deformylase (169 aa).

2 residues coordinate Fe cation: cysteine 91 and histidine 133. The active site involves glutamate 134. Residue histidine 137 coordinates Fe cation.

Belongs to the polypeptide deformylase family. It depends on Fe(2+) as a cofactor.

It carries out the reaction N-terminal N-formyl-L-methionyl-[peptide] + H2O = N-terminal L-methionyl-[peptide] + formate. Functionally, removes the formyl group from the N-terminal Met of newly synthesized proteins. Requires at least a dipeptide for an efficient rate of reaction. N-terminal L-methionine is a prerequisite for activity but the enzyme has broad specificity at other positions. The sequence is that of Peptide deformylase from Salmonella typhi.